Reading from the N-terminus, the 80-residue chain is Conotoxin Bt6.5 (80 aa).

Positions 1 to 22 (MKLTCVLIIAVLFLTACQLATA) are cleaved as a signal peptide. Positions 23 to 45 (KTYSTGRQKHRALRSTDKNIKLS) are excised as a propeptide. Intrachain disulfides connect Cys48-Cys62, Cys55-Cys66, and Cys61-Cys73.

It belongs to the conotoxin O1 superfamily. As to expression, expressed by the venom duct.

The protein resides in the secreted. When injected intracranially in mice, induces a series of symptoms such as quivering, climbing, scratching, barrel rolling and paralysis of limbs. Unexpectedly, no effect is observed on ionic currents when tested on locust DUM neuron. In Conus betulinus (Beech cone), this protein is Conotoxin Bt6.5.